Consider the following 508-residue polypeptide: Adenosine deaminase (508 aa).

The N-terminal stretch at 1-18 (MFSQLVVWLLATSTVCLA) is a signal peptide.

This sequence belongs to the metallo-dependent hydrolases superfamily. Adenosine and AMP deaminases family. ADGF subfamily. The cofactor is Zn(2+). In terms of tissue distribution, salivary gland (at protein level).

It is found in the secreted. The catalysed reaction is adenosine + H2O + H(+) = inosine + NH4(+). Its function is as follows. Catalyzes the deamination of adenosine to inosine. This Lutzomyia longipalpis (Sand fly) protein is Adenosine deaminase.